Consider the following 130-residue polypeptide: Fumarate reductase subunit D (130 aa).

3 helical membrane passes run 35–55 (FAMITPITVLVLGILAPLGVI), 67–87 (SFATSIIGALFIIGTLALPMW), and 110–130 (IACYGFATIISALAVVFIFMI).

Belongs to the FrdD family. Part of an enzyme complex containing four subunits: a flavoprotein (FrdA), an iron-sulfur protein (FrdB), and two hydrophobic anchor proteins (FrdC and FrdD).

The protein resides in the cell inner membrane. In terms of biological role, anchors the catalytic components of the fumarate reductase complex to the cell membrane, binds quinones. This is Fumarate reductase subunit D from Vibrio cholerae serotype O1 (strain M66-2).